A 69-amino-acid polypeptide reads, in one-letter code: Sec-independent protein translocase protein TatA (69 aa).

The helical transmembrane segment at 1–21 (MFGKLGMPELVLIFAVALVIF) threads the bilayer.

The protein belongs to the TatA/E family. In terms of assembly, forms a complex with TatC.

It is found in the cell membrane. Part of the twin-arginine translocation (Tat) system that transports large folded proteins containing a characteristic twin-arginine motif in their signal peptide across membranes. TatA could form the protein-conducting channel of the Tat system. In Alkaliphilus metalliredigens (strain QYMF), this protein is Sec-independent protein translocase protein TatA.